Here is a 99-residue protein sequence, read N- to C-terminus: Aspartyl/glutamyl-tRNA(Asn/Gln) amidotransferase subunit C (99 aa).

The protein belongs to the GatC family. As to quaternary structure, heterotrimer of A, B and C subunits.

It catalyses the reaction L-glutamyl-tRNA(Gln) + L-glutamine + ATP + H2O = L-glutaminyl-tRNA(Gln) + L-glutamate + ADP + phosphate + H(+). The catalysed reaction is L-aspartyl-tRNA(Asn) + L-glutamine + ATP + H2O = L-asparaginyl-tRNA(Asn) + L-glutamate + ADP + phosphate + 2 H(+). Allows the formation of correctly charged Asn-tRNA(Asn) or Gln-tRNA(Gln) through the transamidation of misacylated Asp-tRNA(Asn) or Glu-tRNA(Gln) in organisms which lack either or both of asparaginyl-tRNA or glutaminyl-tRNA synthetases. The reaction takes place in the presence of glutamine and ATP through an activated phospho-Asp-tRNA(Asn) or phospho-Glu-tRNA(Gln). The chain is Aspartyl/glutamyl-tRNA(Asn/Gln) amidotransferase subunit C from Corynebacterium glutamicum (strain R).